A 236-amino-acid polypeptide reads, in one-letter code: Phosphoribosylaminoimidazole-succinocarboxamide synthase (236 aa).

This sequence belongs to the SAICAR synthetase family.

The enzyme catalyses 5-amino-1-(5-phospho-D-ribosyl)imidazole-4-carboxylate + L-aspartate + ATP = (2S)-2-[5-amino-1-(5-phospho-beta-D-ribosyl)imidazole-4-carboxamido]succinate + ADP + phosphate + 2 H(+). Its pathway is purine metabolism; IMP biosynthesis via de novo pathway; 5-amino-1-(5-phospho-D-ribosyl)imidazole-4-carboxamide from 5-amino-1-(5-phospho-D-ribosyl)imidazole-4-carboxylate: step 1/2. This Rickettsia felis (strain ATCC VR-1525 / URRWXCal2) (Rickettsia azadi) protein is Phosphoribosylaminoimidazole-succinocarboxamide synthase.